We begin with the raw amino-acid sequence, 507 residues long: ATP synthase subunit alpha (507 aa).

168 to 175 (GDRQTGKT) is a binding site for ATP.

It belongs to the ATPase alpha/beta chains family. F-type ATPases have 2 components, CF(1) - the catalytic core - and CF(0) - the membrane proton channel. CF(1) has five subunits: alpha(3), beta(3), gamma(1), delta(1), epsilon(1). CF(0) has three main subunits: a(1), b(2) and c(9-12). The alpha and beta chains form an alternating ring which encloses part of the gamma chain. CF(1) is attached to CF(0) by a central stalk formed by the gamma and epsilon chains, while a peripheral stalk is formed by the delta and b chains.

The protein resides in the cell membrane. It carries out the reaction ATP + H2O + 4 H(+)(in) = ADP + phosphate + 5 H(+)(out). Functionally, produces ATP from ADP in the presence of a proton gradient across the membrane. The alpha chain is a regulatory subunit. This Mesomycoplasma hyopneumoniae (strain 7448) (Mycoplasma hyopneumoniae) protein is ATP synthase subunit alpha.